Reading from the N-terminus, the 226-residue chain is Large ribosomal subunit protein uL1 (226 aa).

Belongs to the universal ribosomal protein uL1 family. As to quaternary structure, part of the 50S ribosomal subunit.

Binds directly to 23S rRNA. The L1 stalk is quite mobile in the ribosome, and is involved in E site tRNA release. In terms of biological role, protein L1 is also a translational repressor protein, it controls the translation of the L11 operon by binding to its mRNA. The polypeptide is Large ribosomal subunit protein uL1 (Selenomonas ruminantium).